The following is a 237-amino-acid chain: 2-C-methyl-D-erythritol 4-phosphate cytidylyltransferase (237 aa).

It belongs to the IspD/TarI cytidylyltransferase family. IspD subfamily.

The enzyme catalyses 2-C-methyl-D-erythritol 4-phosphate + CTP + H(+) = 4-CDP-2-C-methyl-D-erythritol + diphosphate. The protein operates within isoprenoid biosynthesis; isopentenyl diphosphate biosynthesis via DXP pathway; isopentenyl diphosphate from 1-deoxy-D-xylulose 5-phosphate: step 2/6. Its function is as follows. Catalyzes the formation of 4-diphosphocytidyl-2-C-methyl-D-erythritol from CTP and 2-C-methyl-D-erythritol 4-phosphate (MEP). In Clostridioides difficile (strain 630) (Peptoclostridium difficile), this protein is 2-C-methyl-D-erythritol 4-phosphate cytidylyltransferase.